The primary structure comprises 221 residues: UPF0319 protein CGSHiEE_03630 (221 aa).

The N-terminal stretch at 1-21 is a signal peptide; sequence MKLRAVVLGLATLCTSTATFA.

It belongs to the UPF0319 family.

The protein is UPF0319 protein CGSHiEE_03630 of Haemophilus influenzae (strain PittEE).